We begin with the raw amino-acid sequence, 207 residues long: Large ribosomal subunit protein uL4 (207 aa).

The tract at residues 50–76 (AVKNRSAVSGGGRKPWKQKGTGRARQG) is disordered.

Belongs to the universal ribosomal protein uL4 family. As to quaternary structure, part of the 50S ribosomal subunit.

In terms of biological role, one of the primary rRNA binding proteins, this protein initially binds near the 5'-end of the 23S rRNA. It is important during the early stages of 50S assembly. It makes multiple contacts with different domains of the 23S rRNA in the assembled 50S subunit and ribosome. Functionally, forms part of the polypeptide exit tunnel. In Staphylococcus aureus (strain MRSA252), this protein is Large ribosomal subunit protein uL4.